The sequence spans 128 residues: Large-conductance mechanosensitive channel (128 aa).

The next 2 membrane-spanning stretches (helical) occupy residues 10-30 (FAMR…GAFG) and 76-96 (GLFI…FMMV).

It belongs to the MscL family. In terms of assembly, homopentamer.

Its subcellular location is the cell inner membrane. Channel that opens in response to stretch forces in the membrane lipid bilayer. May participate in the regulation of osmotic pressure changes within the cell. This chain is Large-conductance mechanosensitive channel, found in Mannheimia succiniciproducens (strain KCTC 0769BP / MBEL55E).